A 113-amino-acid polypeptide reads, in one-letter code: MTTVITRLYADEKTACDIARQLKSEGIPKRALKVVVADGKKGAALAEALKSAGVHPSAAAGYAERVAGGLPLVAKVNYKPLGAAKLVRAITARARWSRSRTQPKSSPVRTHLK.

Its function is as follows. Seems to be required for the LH-II stabilization. This is Protein PucD (pucD) from Rhodobacter capsulatus (Rhodopseudomonas capsulata).